Here is a 93-residue protein sequence, read N- to C-terminus: Large ribosomal subunit protein bL31B (93 aa).

It belongs to the bacterial ribosomal protein bL31 family. Type B subfamily. As to quaternary structure, part of the 50S ribosomal subunit.

The sequence is that of Large ribosomal subunit protein bL31B from Pseudomonas syringae pv. tomato (strain ATCC BAA-871 / DC3000).